Reading from the N-terminus, the 366-residue chain is tRNA/tmRNA (uracil-C(5))-methyltransferase (366 aa).

Positions 190, 218, 223, 239, and 299 each coordinate S-adenosyl-L-methionine. The Nucleophile role is filled by C324. The Proton acceptor role is filled by E358.

This sequence belongs to the class I-like SAM-binding methyltransferase superfamily. RNA M5U methyltransferase family. TrmA subfamily.

It catalyses the reaction uridine(54) in tRNA + S-adenosyl-L-methionine = 5-methyluridine(54) in tRNA + S-adenosyl-L-homocysteine + H(+). It carries out the reaction uridine(341) in tmRNA + S-adenosyl-L-methionine = 5-methyluridine(341) in tmRNA + S-adenosyl-L-homocysteine + H(+). Functionally, dual-specificity methyltransferase that catalyzes the formation of 5-methyluridine at position 54 (m5U54) in all tRNAs, and that of position 341 (m5U341) in tmRNA (transfer-mRNA). The polypeptide is tRNA/tmRNA (uracil-C(5))-methyltransferase (Escherichia coli O157:H7).